The following is a 166-amino-acid chain: FMN reductase (NADH) RutF (166 aa).

Belongs to the non-flavoprotein flavin reductase family. RutF subfamily.

The catalysed reaction is FMNH2 + NAD(+) = FMN + NADH + 2 H(+). Its function is as follows. Catalyzes the reduction of FMN to FMNH2 which is used to reduce pyrimidine by RutA via the Rut pathway. The sequence is that of FMN reductase (NADH) RutF from Cronobacter sakazakii (strain ATCC BAA-894) (Enterobacter sakazakii).